Consider the following 321-residue polypeptide: ATP-dependent 6-phosphofructokinase (321 aa).

ATP is bound at residue Gly-12. ADP contacts are provided by residues 22–26 and 55–60; these read RGVVR and RYSVSD. Residues 73-74 and 103-106 contribute to the ATP site; these read RF and GDGS. Residue Asp-104 coordinates Mg(2+). A substrate-binding site is contributed by 127–129; that stretch reads TID. The active-site Proton acceptor is Asp-129. Position 156 (Arg-156) interacts with ADP. Residues Arg-164 and 171–173 each bind substrate; that span reads MGR. ADP-binding positions include 187-189 and 215-217; these read GCE and KRH. Substrate contacts are provided by residues Glu-224, Arg-245, and 251-254; that span reads HVQR.

This sequence belongs to the phosphofructokinase type A (PFKA) family. ATP-dependent PFK group I subfamily. Prokaryotic clade 'B1' sub-subfamily. Homotetramer. It depends on Mg(2+) as a cofactor.

The protein localises to the cytoplasm. It carries out the reaction beta-D-fructose 6-phosphate + ATP = beta-D-fructose 1,6-bisphosphate + ADP + H(+). Its pathway is carbohydrate degradation; glycolysis; D-glyceraldehyde 3-phosphate and glycerone phosphate from D-glucose: step 3/4. Allosterically activated by ADP and other diphosphonucleosides, and allosterically inhibited by phosphoenolpyruvate. Its function is as follows. Catalyzes the phosphorylation of D-fructose 6-phosphate to fructose 1,6-bisphosphate by ATP, the first committing step of glycolysis. The polypeptide is ATP-dependent 6-phosphofructokinase (Mannheimia succiniciproducens (strain KCTC 0769BP / MBEL55E)).